Here is a 600-residue protein sequence, read N- to C-terminus: Glutamine--fructose-6-phosphate aminotransferase [isomerizing] (600 aa).

C2 serves as the catalytic Nucleophile; for GATase activity. The region spanning 2–217 is the Glutamine amidotransferase type-2 domain; the sequence is CGIVGYIGYQ…DGELVIVTSE (216 aa). SIS domains are found at residues 283–422 and 452–590; these read IINE…AKGF and IASD…VDKP. The active-site For Fru-6P isomerization activity is the K595.

Homodimer.

It localises to the cytoplasm. It catalyses the reaction D-fructose 6-phosphate + L-glutamine = D-glucosamine 6-phosphate + L-glutamate. Its function is as follows. Catalyzes the first step in hexosamine metabolism, converting fructose-6P into glucosamine-6P using glutamine as a nitrogen source. This Geobacillus kaustophilus (strain HTA426) protein is Glutamine--fructose-6-phosphate aminotransferase [isomerizing].